Reading from the N-terminus, the 323-residue chain is Aldo-keto reductase family 1 member C1 (323 aa).

Residues 20–24 and D50 contribute to the NADP(+) site; that span reads GFGTY. Y24 provides a ligand contact to substrate. Catalysis depends on Y55, which acts as the Proton donor. H117 is a substrate binding site. Residues 166–167, Q190, and 216–222 contribute to the NADP(+) site; these read SN and YSALGSH. Substrate contacts are provided by H222 and W227. 270–280 is an NADP(+) binding site; sequence KSYNEQRIRQN.

Belongs to the aldo/keto reductase family. As to quaternary structure, monomer. In terms of tissue distribution, expressed in all tissues tested including liver, prostate, testis, adrenal gland, brain, uterus, mammary gland and keratinocytes. Highest levels found in liver, mammary gland and brain.

The protein localises to the cytoplasm. Its subcellular location is the cytosol. It carries out the reaction a 3alpha-hydroxysteroid + NADP(+) = a 3-oxosteroid + NADPH + H(+). The enzyme catalyses a 3alpha-hydroxysteroid + NAD(+) = a 3-oxosteroid + NADH + H(+). It catalyses the reaction (17R,20S)-17,20-dihydroxypregn-4-en-3-one + NADP(+) = 17alpha-hydroxyprogesterone + NADPH + H(+). The catalysed reaction is (17R,20S)-17,20-dihydroxypregn-4-en-3-one + NAD(+) = 17alpha-hydroxyprogesterone + NADH + H(+). It carries out the reaction (20S)-hydroxypregn-4-en-3-one + NADP(+) = progesterone + NADPH + H(+). The enzyme catalyses (20S)-hydroxypregn-4-en-3-one + NAD(+) = progesterone + NADH + H(+). It catalyses the reaction (1R,2R)-1,2-dihydrobenzene-1,2-diol + NADP(+) = catechol + NADPH + H(+). The catalysed reaction is (S)-indan-1-ol + NAD(+) = indan-1-one + NADH + H(+). It carries out the reaction (S)-indan-1-ol + NADP(+) = indan-1-one + NADPH + H(+). The enzyme catalyses 5alpha-androstane-3alpha,17beta-diol + NADP(+) = 17beta-hydroxy-5alpha-androstan-3-one + NADPH + H(+). It catalyses the reaction 5alpha-androstane-3beta,17beta-diol + NADP(+) = 17beta-hydroxy-5alpha-androstan-3-one + NADPH + H(+). The catalysed reaction is 5alpha-androstane-3alpha,17beta-diol + NAD(+) = 17beta-hydroxy-5alpha-androstan-3-one + NADH + H(+). It carries out the reaction 17beta-hydroxy-5alpha-androstan-3-one + NADP(+) = 5alpha-androstan-3,17-dione + NADPH + H(+). The enzyme catalyses androsterone + NADP(+) = 5alpha-androstan-3,17-dione + NADPH + H(+). It catalyses the reaction androsterone + NADPH + H(+) = 5alpha-androstane-3alpha,17beta-diol + NADP(+). The catalysed reaction is 5alpha-androstane-3alpha,17beta-diol + NAD(+) = androsterone + NADH + H(+). It carries out the reaction 17beta-estradiol + NADP(+) = estrone + NADPH + H(+). The enzyme catalyses 17beta-estradiol + NAD(+) = estrone + NADH + H(+). It catalyses the reaction testosterone + NADP(+) = androst-4-ene-3,17-dione + NADPH + H(+). The catalysed reaction is 20alpha-hydroxy-5beta-pregnan-3-one + NADP(+) = 5beta-pregnan-3,20-dione + NADPH + H(+). It carries out the reaction 3beta-hydroxy-5beta-pregnane-20-one + NADP(+) = 5beta-pregnan-3,20-dione + NADPH + H(+). The enzyme catalyses 3beta-hydroxy-5beta-pregnane-20-one + NADPH + H(+) = 3beta,20alpha-dihydroxy-5beta-pregnane + NADP(+). It catalyses the reaction (3beta,5alpha,17beta)-3-hydroxyandrostan-17-yl sulfate + NADP(+) = 5alpha-dihydrotestosterone sulfate + NADPH + H(+). It participates in steroid metabolism. Its activity is regulated as follows. Inhibited by hexestrol with an IC(50) of 9.5 uM, 1,10-phenanthroline with an IC(50) of 55 uM, 1,7-phenanthroline with an IC(50) of 72 uM, flufenamic acid with an IC(50) of 6.0 uM, indomethacin with an IC(50) of 140 uM, ibuprofen with an IC(50) of 950 uM, lithocholic acid with an IC(50) of 25 uM, ursodeoxycholic acid with an IC(50) of 340 uM and chenodeoxycholic acid with an IC(50) of 570 uM. The oxidation reaction is inhibited by low micromolar concentrations of NADPH. In terms of biological role, cytosolic aldo-keto reductase that catalyzes the NADH and NADPH-dependent reduction of ketosteroids to hydroxysteroids. Most probably acts as a reductase in vivo since the oxidase activity measured in vitro is inhibited by physiological concentrations of NADPH. Displays a broad positional specificity acting on positions 3, 17 and 20 of steroids and regulates the metabolism of hormones like estrogens and androgens. May also reduce conjugated steroids such as 5alpha-dihydrotestosterone sulfate. Displays affinity for bile acids. This Homo sapiens (Human) protein is Aldo-keto reductase family 1 member C1 (AKR1C1).